A 492-amino-acid polypeptide reads, in one-letter code: Metal cation symporter ZIP14 (492 aa).

An N-terminal signal peptide occupies residues 1–30 (MKLLLLHPAFQSCLLLTLLGLWRTTPEAHA). Topologically, residues 31-157 (SSLGAPAISA…PSAVEVWGYG (127 aa)) are extracellular. 3 N-linked (GlcNAc...) asparagine glycosylation sites follow: Asn-77, Asn-87, and Asn-102. A helical membrane pass occupies residues 158-178 (LLCVTVISLCSLLGASVVPFM). Residues 179-186 (KKTFYKRL) are Cytoplasmic-facing. The helical transmembrane segment at 187–207 (LLYFIALAIGTLYSNALFQLI) threads the bilayer. Residues 208–224 (PEAFGFNPLEDYYVSKS) are Extracellular-facing. Residues 225–245 (AVVFGGFYLFFFTEKILKILL) traverse the membrane as a helical segment. Residues 246-397 (KQKNEHHHGH…LLNAGMSIQQ (152 aa)) lie on the Cytoplasmic side of the membrane. Residues 251–258 (HHHGHSHY) carry the HHHGHXHX-motif motif. The XEXPHE-motif motif lies at 376–381 (EEFPHE). The chain crosses the membrane as a helical span at residues 398–418 (ALFFNFLSACCCYLGLAFGIL). The Extracellular segment spans residues 419 to 424 (AGSHFS). A helical transmembrane segment spans residues 425–445 (ANWIFALAGGMFLYISLADMF). Topologically, residues 446 to 460 (PEMNEVCQEDERKGS) are cytoplasmic. The helical transmembrane segment at 461–481 (ILIPFIIQNLGLLTGFTIMVV) threads the bilayer. Topologically, residues 482-492 (LTMYSGQIQIG) are extracellular.

Belongs to the ZIP transporter (TC 2.A.5) family. In terms of assembly, homotrimer. Ubiquitinated. Ubiquitination occurs upon iron depletion. The ubiquitinated form undergoes proteasomal degradation. In terms of processing, N-glycosylated. N-glycosylation at Asn-102 is required for iron-regulated extraction of the transporter from membranes and subsequent proteasomal degradation. As to expression, ubiquitously expressed, with higher expression in liver, pancreas, fetal liver, thyroid gland, left and right ventricle, right atrium and fetal heart. Weakly expressed in spleen, thymus, and peripheral blood leukocytes. Expressed in liver and in brain by large neurons in the globus pallidus, the insular cortex and the dentate nucleus and to a lower extent in the putamen and the caudate nucleus (at protein level). Expressed in osteoblasts and giant osteoclast-like cells, but not in osteocytes found osteoblastoma and giant cell tumors (at protein level). Expressed by microvascular capillary endothelial cells that constitute the blood-brain barrier (at protein level). Expressed by macrophages. In terms of tissue distribution, widely expressed but not detected in brain, heart, skeletal muscle, placenta and fetal skin.

Its subcellular location is the cell membrane. It localises to the apical cell membrane. The protein resides in the basolateral cell membrane. It is found in the early endosome membrane. The protein localises to the late endosome membrane. Its subcellular location is the lysosome membrane. It catalyses the reaction Zn(2+)(out) + 2 hydrogencarbonate(out) = Zn(2+)(in) + 2 hydrogencarbonate(in). The enzyme catalyses Mn(2+)(out) + 2 hydrogencarbonate(out) = Mn(2+)(in) + 2 hydrogencarbonate(in). The catalysed reaction is Fe(2+)(out) + 2 hydrogencarbonate(out) = Fe(2+)(in) + 2 hydrogencarbonate(in). It carries out the reaction Cd(2+)(out) + 2 hydrogencarbonate(out) = Cd(2+)(in) + 2 hydrogencarbonate(in). Electroneutral transporter of the plasma membrane mediating the cellular uptake of the divalent metal cations zinc, manganese and iron that are important for tissue homeostasis, metabolism, development and immunity. Functions as an energy-dependent symporter, transporting through the membranes an electroneutral complex composed of a divalent metal cation and two bicarbonate anions. Beside these endogenous cellular substrates, can also import cadmium a non-essential metal which is cytotoxic and carcinogenic. Controls the cellular uptake by the intestinal epithelium of systemic zinc, which is in turn required to maintain tight junctions and the intestinal permeability. Modifies the activity of zinc-dependent phosphodiesterases, thereby indirectly regulating G protein-coupled receptor signaling pathways important for gluconeogenesis and chondrocyte differentiation. Regulates insulin receptor signaling, glucose uptake, glycogen synthesis and gluconeogenesis in hepatocytes through the zinc-dependent intracellular catabolism of insulin. Through zinc cellular uptake also plays a role in the adaptation of cells to endoplasmic reticulum stress. Major manganese transporter of the basolateral membrane of intestinal epithelial cells, it plays a central role in manganese systemic homeostasis through intestinal manganese uptake. Also involved in manganese extracellular uptake by cells of the blood-brain barrier. May also play a role in manganese and zinc homeostasis participating in their elimination from the blood through the hepatobiliary excretion. Also functions in the extracellular uptake of free iron. May also function intracellularly and mediate the transport from endosomes to cytosol of iron endocytosed by transferrin. Plays a role in innate immunity by regulating the expression of cytokines by activated macrophages. The chain is Metal cation symporter ZIP14 from Homo sapiens (Human).